The sequence spans 214 residues: Pyridoxine/pyridoxamine 5'-phosphate oxidase (214 aa).

Residues Arg8–Tyr11 and Lys66 each bind substrate. FMN contacts are provided by residues Arg61–Lys66, Phe76–Thr77, Arg82, Lys83, and Gln105. Tyr123, Arg127, and Ser131 together coordinate substrate. FMN contacts are provided by residues Gln140–Ser141 and Trp184. Residue Arg190–His192 coordinates substrate. Arg194 is a binding site for FMN.

It belongs to the pyridoxamine 5'-phosphate oxidase family. Homodimer. It depends on FMN as a cofactor.

The catalysed reaction is pyridoxamine 5'-phosphate + O2 + H2O = pyridoxal 5'-phosphate + H2O2 + NH4(+). The enzyme catalyses pyridoxine 5'-phosphate + O2 = pyridoxal 5'-phosphate + H2O2. It participates in cofactor metabolism; pyridoxal 5'-phosphate salvage; pyridoxal 5'-phosphate from pyridoxamine 5'-phosphate: step 1/1. It functions in the pathway cofactor metabolism; pyridoxal 5'-phosphate salvage; pyridoxal 5'-phosphate from pyridoxine 5'-phosphate: step 1/1. Functionally, catalyzes the oxidation of either pyridoxine 5'-phosphate (PNP) or pyridoxamine 5'-phosphate (PMP) into pyridoxal 5'-phosphate (PLP). The chain is Pyridoxine/pyridoxamine 5'-phosphate oxidase from Burkholderia ambifaria (strain ATCC BAA-244 / DSM 16087 / CCUG 44356 / LMG 19182 / AMMD) (Burkholderia cepacia (strain AMMD)).